We begin with the raw amino-acid sequence, 337 residues long: F420-dependent glucose-6-phosphate dehydrogenase (337 aa).

Asp-44 serves as a coordination point for coenzyme F420-(gamma-Glu)n. The Proton donor role is filled by His-45. Residues Thr-81 and 112-113 (TG) each bind coenzyme F420-(gamma-Glu)n. Glu-114 (proton acceptor) is an active-site residue. Coenzyme F420-(gamma-Glu)n is bound by residues Asn-117, 180–181 (GG), and 183–184 (GV). Substrate contacts are provided by Thr-198, Lys-201, Lys-262, and Arg-286.

The protein belongs to the F420-dependent glucose-6-phosphate dehydrogenase family. Homodimer.

It catalyses the reaction oxidized coenzyme F420-(gamma-L-Glu)(n) + D-glucose 6-phosphate + H(+) = 6-phospho-D-glucono-1,5-lactone + reduced coenzyme F420-(gamma-L-Glu)(n). Catalyzes the coenzyme F420-dependent oxidation of glucose 6-phosphate (G6P) to 6-phosphogluconolactone. This Kineococcus radiotolerans (strain ATCC BAA-149 / DSM 14245 / SRS30216) protein is F420-dependent glucose-6-phosphate dehydrogenase.